The chain runs to 472 residues: Ras-GEF domain-containing family member 1B (472 aa).

An N-terminal Ras-GEF domain is found at 34-164 (HDNNLLSGSL…MIQCLIRKLA (131 aa)). The Ras-GEF domain maps to 204–452 (DPYTLAQQLT…YLASYESEGP (249 aa)).

As to quaternary structure, interacts with CCDC124 during cytokinesis. Interacts with Ras family proteins.

It localises to the early endosome. The protein localises to the late endosome. Its subcellular location is the midbody. Functionally, guanine nucleotide exchange factor (GEF) with specificity for RAP2A, it doesn't seems to activate other Ras family proteins (in vitro). The sequence is that of Ras-GEF domain-containing family member 1B (RASGEF1B) from Bos taurus (Bovine).